A 184-amino-acid chain; its full sequence is Protein GrpE (184 aa).

Residues 1–12 (MADEQLNEKDLN) show a composition bias toward basic and acidic residues. The segment at 1–22 (MADEQLNEKDLNAEEAGAVDNG) is disordered.

This sequence belongs to the GrpE family. As to quaternary structure, homodimer.

Its subcellular location is the cytoplasm. Participates actively in the response to hyperosmotic and heat shock by preventing the aggregation of stress-denatured proteins, in association with DnaK and GrpE. It is the nucleotide exchange factor for DnaK and may function as a thermosensor. Unfolded proteins bind initially to DnaJ; upon interaction with the DnaJ-bound protein, DnaK hydrolyzes its bound ATP, resulting in the formation of a stable complex. GrpE releases ADP from DnaK; ATP binding to DnaK triggers the release of the substrate protein, thus completing the reaction cycle. Several rounds of ATP-dependent interactions between DnaJ, DnaK and GrpE are required for fully efficient folding. The protein is Protein GrpE of Pseudomonas putida (strain W619).